Reading from the N-terminus, the 95-residue chain is Large ribosomal subunit protein bL25 (95 aa).

Belongs to the bacterial ribosomal protein bL25 family. In terms of assembly, part of the 50S ribosomal subunit; part of the 5S rRNA/L5/L18/L25 subcomplex. Contacts the 5S rRNA. Binds to the 5S rRNA independently of L5 and L18.

This is one of the proteins that binds to the 5S RNA in the ribosome where it forms part of the central protuberance. This is Large ribosomal subunit protein bL25 from Shewanella amazonensis (strain ATCC BAA-1098 / SB2B).